The following is a 167-amino-acid chain: Peroxiredoxin Pen c 3 (167 aa).

Positions 3 to 167 (LKAGDSFPEG…SRADHVLKQL (165 aa)) constitute a Thioredoxin domain. Cys60 serves as the catalytic Cysteine sulfenic acid (-SOH) intermediate.

The protein belongs to the peroxiredoxin family. Prx5 subfamily. In terms of assembly, homodimer; disulfide-linked, upon oxidation.

The enzyme catalyses a hydroperoxide + [thioredoxin]-dithiol = an alcohol + [thioredoxin]-disulfide + H2O. Thiol-specific peroxidase that catalyzes the reduction of hydrogen peroxide and organic hydroperoxides to water and alcohols, respectively. Plays a role in cell protection against oxidative stress by detoxifying peroxides and as sensor of hydrogen peroxide-mediated signaling events. This is Peroxiredoxin Pen c 3 from Penicillium citrinum.